The primary structure comprises 121 residues: Large ribosomal subunit protein bL12 (121 aa).

The protein belongs to the bacterial ribosomal protein bL12 family. Homodimer. Part of the ribosomal stalk of the 50S ribosomal subunit. Forms a multimeric L10(L12)X complex, where L10 forms an elongated spine to which 2 to 4 L12 dimers bind in a sequential fashion. Binds GTP-bound translation factors.

Functionally, forms part of the ribosomal stalk which helps the ribosome interact with GTP-bound translation factors. Is thus essential for accurate translation. This is Large ribosomal subunit protein bL12 from Acinetobacter baylyi (strain ATCC 33305 / BD413 / ADP1).